Here is a 232-residue protein sequence, read N- to C-terminus: MSGNSQLPPDVIGFICSKYDIILASTSPRRYEILHDIMGITDLKTMVSTFEENLDKMNYSTDPIGYVCDTSWHKAQNIIEILTDYEDENPNEIDKPKLIICADTIIIDKSGRIYEKPKTKEVQKKFLMKFCYEDDEPVNVVTAVTLIKWYGRENFELVPFRDETKVYFDNKIPLRILEEYVESGDGLEVGGGFKIQGQGAILIEKIEGDYYNVVGLPLNKTFKGLYAEANSI.

Asp-103 serves as the catalytic Proton acceptor.

It belongs to the Maf family. YhdE subfamily. A divalent metal cation serves as cofactor.

It is found in the cytoplasm. The enzyme catalyses dTTP + H2O = dTMP + diphosphate + H(+). It catalyses the reaction UTP + H2O = UMP + diphosphate + H(+). The catalysed reaction is 5-methyl-UTP + H2O = 5-methyl-UMP + diphosphate + H(+). It carries out the reaction psi-UTP + H2O = psi-UMP + diphosphate + H(+). Nucleoside triphosphate pyrophosphatase that hydrolyzes dTTP and UTP. Can also hydrolyze the modified nucleotides 5-methyl-UTP (m(5)UTP) and pseudo-UTP. Has weak activity with CTP. May have a dual role in cell division arrest and in preventing the incorporation of modified nucleotides into cellular nucleic acids. This Saccharomyces cerevisiae (strain ATCC 204508 / S288c) (Baker's yeast) protein is dTTP/UTP pyrophosphatase.